We begin with the raw amino-acid sequence, 197 residues long: Protein lin-7 homolog C (197 aa).

Ala-2 carries the post-translational modification N-acetylalanine. Residues 2 to 13 (AALGEPVRLERD) carry the Kinase interacting site motif. The region spanning 10–65 (LERDICRAIELLEKLQRSGEVPPQKLQALQRVLQSEFCNAVREVYEHVYETVDISS) is the L27 domain. Positions 93-175 (VVELPKTEEG…KVKLVVRYTP (83 aa)) constitute a PDZ domain.

This sequence belongs to the lin-7 family. In terms of assembly, forms a complex with CASK and APBA1 or CASKIN1. Component of the brain-specific heterotrimeric complex (LIN-10-LIN-2-LIN-7 complex) composed of at least APBA1, CASK, and LIN7, which associates with the motor protein KIF17 to transport vesicles along microtubules. Can also interact with other modular proteins containing protein-protein interaction domains like PALS1, PALS2, MPP7, DLG1, DLG2 and DLG3 through its L27 domain. Interacts with DLG4 and GRIN2B as well as CDH1 and CTNNB1, the channels KCNJ12/Kir2.2, KCNJ4/Kir2.3 and probably KCNJ2/Kir2.1 and SLC6A12/BGT-1 via its PDZ domain. The association of LIN7A with cadherin and beta-catenin is calcium-dependent, occurs at synaptic junctions and requires the actin cytoskeleton. Interacts with EGFR, ERBB2, ERBB3 and ERBB4 with both PDZ and KID domains. Associates with KIF17 via APBA1. Interacts with HTR4. Forms a tripartite complex composed of DLG1, MPP7 and LIN7 (LIN7A or LIN7C). Interacts with MAPK12.

The protein resides in the cell membrane. It localises to the basolateral cell membrane. Its subcellular location is the cell junction. The protein localises to the postsynaptic density membrane. It is found in the tight junction. The protein resides in the synapse. It localises to the synaptosome. In terms of biological role, plays a role in establishing and maintaining the asymmetric distribution of channels and receptors at the plasma membrane of polarized cells. Forms membrane-associated multiprotein complexes that may regulate delivery and recycling of proteins to the correct membrane domains. The tripartite complex composed of LIN7 (LIN7A, LIN7B or LIN7C), CASK and APBA1 associates with the motor protein KIF17 to transport vesicles containing N-methyl-D-aspartate (NMDA) receptor subunit NR2B along microtubules. This complex may have the potential to couple synaptic vesicle exocytosis to cell adhesion in brain. Ensures the proper localization of GRIN2B (subunit 2B of the NMDA receptor) to neuronal postsynaptic density and may function in localizing synaptic vesicles at synapses where it is recruited by beta-catenin and cadherin. Required to localize Kir2 channels, GABA transporter (SLC6A12) and EGFR/ERBB1, ERBB2, ERBB3 and ERBB4 to the basolateral membrane of epithelial cells. This is Protein lin-7 homolog C (LIN7C) from Bos taurus (Bovine).